A 352-amino-acid chain; its full sequence is Holliday junction branch migration complex subunit RuvB (352 aa).

The disordered stretch occupies residues 1-42; sequence MAIVSSSAGRADSQPPAAKSRVVDASPLPEEASPAREDGLRP. The large ATPase domain (RuvB-L) stretch occupies residues 13–201; that stretch reads SQPPAAKSRV…FGLIQRLEFY (189 aa). Residues 33 to 42 show a composition bias toward basic and acidic residues; that stretch reads SPAREDGLRP. ATP-binding residues include Leu-40, Arg-41, Gly-82, Lys-85, Thr-86, Thr-87, Arg-191, Tyr-201, and Arg-238. Position 86 (Thr-86) interacts with Mg(2+). A small ATPAse domain (RuvB-S) region spans residues 202–273; the sequence is GLEDLQAIVE…LVDEALTLHR (72 aa). The head domain (RuvB-H) stretch occupies residues 276–352; it reads ARGLDASDRR…RRHLGWPELP (77 aa). Residues Arg-331 and Arg-336 each coordinate DNA.

The protein belongs to the RuvB family. As to quaternary structure, homohexamer. Forms an RuvA(8)-RuvB(12)-Holliday junction (HJ) complex. HJ DNA is sandwiched between 2 RuvA tetramers; dsDNA enters through RuvA and exits via RuvB. An RuvB hexamer assembles on each DNA strand where it exits the tetramer. Each RuvB hexamer is contacted by two RuvA subunits (via domain III) on 2 adjacent RuvB subunits; this complex drives branch migration. In the full resolvosome a probable DNA-RuvA(4)-RuvB(12)-RuvC(2) complex forms which resolves the HJ.

The protein resides in the cytoplasm. It carries out the reaction ATP + H2O = ADP + phosphate + H(+). Functionally, the RuvA-RuvB-RuvC complex processes Holliday junction (HJ) DNA during genetic recombination and DNA repair, while the RuvA-RuvB complex plays an important role in the rescue of blocked DNA replication forks via replication fork reversal (RFR). RuvA specifically binds to HJ cruciform DNA, conferring on it an open structure. The RuvB hexamer acts as an ATP-dependent pump, pulling dsDNA into and through the RuvAB complex. RuvB forms 2 homohexamers on either side of HJ DNA bound by 1 or 2 RuvA tetramers; 4 subunits per hexamer contact DNA at a time. Coordinated motions by a converter formed by DNA-disengaged RuvB subunits stimulates ATP hydrolysis and nucleotide exchange. Immobilization of the converter enables RuvB to convert the ATP-contained energy into a lever motion, pulling 2 nucleotides of DNA out of the RuvA tetramer per ATP hydrolyzed, thus driving DNA branch migration. The RuvB motors rotate together with the DNA substrate, which together with the progressing nucleotide cycle form the mechanistic basis for DNA recombination by continuous HJ branch migration. Branch migration allows RuvC to scan DNA until it finds its consensus sequence, where it cleaves and resolves cruciform DNA. In Prochlorococcus marinus (strain MIT 9303), this protein is Holliday junction branch migration complex subunit RuvB.